The following is a 107-amino-acid chain: Quaternary ammonium compound-resistance protein QacG (107 aa).

The next 4 helical transmembrane spans lie at 1 to 21, 26 to 46, 57 to 77, and 84 to 104; these read MHYL…SFLK, FTKL…FYFL, ITYA…SVIV, and LISI…NVFG.

Belongs to the drug/metabolite transporter (DMT) superfamily. Small multidrug resistance (SMR) (TC 2.A.7.1) family.

It is found in the cell membrane. Its function is as follows. Multidrug exporter. Is implicated for the resistance to bacteriocidal quaternary ammonium compounds. The chain is Quaternary ammonium compound-resistance protein QacG (qacG) from Staphylococcus sp. (strain ST94).